The sequence spans 280 residues: Phosphatidylserine decarboxylase proenzyme (280 aa).

Catalysis depends on charge relay system; for autoendoproteolytic cleavage activity residues Asp-88, His-144, and Ser-247. Ser-247 functions as the Schiff-base intermediate with substrate; via pyruvic acid; for decarboxylase activity in the catalytic mechanism. Ser-247 is modified (pyruvic acid (Ser); by autocatalysis).

This sequence belongs to the phosphatidylserine decarboxylase family. PSD-B subfamily. Prokaryotic type I sub-subfamily. As to quaternary structure, heterodimer of a large membrane-associated beta subunit and a small pyruvoyl-containing alpha subunit. Pyruvate is required as a cofactor. Post-translationally, is synthesized initially as an inactive proenzyme. Formation of the active enzyme involves a self-maturation process in which the active site pyruvoyl group is generated from an internal serine residue via an autocatalytic post-translational modification. Two non-identical subunits are generated from the proenzyme in this reaction, and the pyruvate is formed at the N-terminus of the alpha chain, which is derived from the carboxyl end of the proenzyme. The autoendoproteolytic cleavage occurs by a canonical serine protease mechanism, in which the side chain hydroxyl group of the serine supplies its oxygen atom to form the C-terminus of the beta chain, while the remainder of the serine residue undergoes an oxidative deamination to produce ammonia and the pyruvoyl prosthetic group on the alpha chain. During this reaction, the Ser that is part of the protease active site of the proenzyme becomes the pyruvoyl prosthetic group, which constitutes an essential element of the active site of the mature decarboxylase.

The protein localises to the cell membrane. It carries out the reaction a 1,2-diacyl-sn-glycero-3-phospho-L-serine + H(+) = a 1,2-diacyl-sn-glycero-3-phosphoethanolamine + CO2. It functions in the pathway phospholipid metabolism; phosphatidylethanolamine biosynthesis; phosphatidylethanolamine from CDP-diacylglycerol: step 2/2. In terms of biological role, catalyzes the formation of phosphatidylethanolamine (PtdEtn) from phosphatidylserine (PtdSer). This chain is Phosphatidylserine decarboxylase proenzyme, found in Stenotrophomonas maltophilia (strain R551-3).